The sequence spans 197 residues: Probable chorismate pyruvate-lyase 2 (197 aa).

Basic and acidic residues predominate over residues 1–14 (MRFDAADAHWRETP). Residues 1–23 (MRFDAADAHWRETPRPGASSAQK) form a disordered region. Residues Arg73, Leu111, and Glu173 each coordinate substrate.

The protein belongs to the UbiC family.

The protein resides in the cytoplasm. The enzyme catalyses chorismate = 4-hydroxybenzoate + pyruvate. It functions in the pathway cofactor biosynthesis; ubiquinone biosynthesis. In terms of biological role, removes the pyruvyl group from chorismate, with concomitant aromatization of the ring, to provide 4-hydroxybenzoate (4HB) for the ubiquinone pathway. This chain is Probable chorismate pyruvate-lyase 2, found in Burkholderia pseudomallei (strain 1710b).